The following is a 453-amino-acid chain: Bifunctional protein GlmU (453 aa).

The segment at 1 to 227 (MTQDIVILAA…EAEVAGVNDR (227 aa)) is pyrophosphorylase. UDP-N-acetyl-alpha-D-glucosamine is bound by residues 8–11 (LAAG), K22, Q73, 78–79 (GT), 100–102 (YGD), G137, E152, N167, and N225. D102 provides a ligand contact to Mg(2+). N225 contacts Mg(2+). The linker stretch occupies residues 228-248 (VQLAALERELQNQQAVSLMQN). The N-acetyltransferase stretch occupies residues 249–453 (GATLLDPSRI…KDNWPRPIKK (205 aa)). UDP-N-acetyl-alpha-D-glucosamine is bound by residues R331 and K349. Catalysis depends on H361, which acts as the Proton acceptor. UDP-N-acetyl-alpha-D-glucosamine-binding residues include Y364 and N375. Acetyl-CoA contacts are provided by residues A378, 384–385 (NY), S403, A421, and R438.

In the N-terminal section; belongs to the N-acetylglucosamine-1-phosphate uridyltransferase family. It in the C-terminal section; belongs to the transferase hexapeptide repeat family. As to quaternary structure, homotrimer. Mg(2+) serves as cofactor.

The protein localises to the cytoplasm. The catalysed reaction is alpha-D-glucosamine 1-phosphate + acetyl-CoA = N-acetyl-alpha-D-glucosamine 1-phosphate + CoA + H(+). It catalyses the reaction N-acetyl-alpha-D-glucosamine 1-phosphate + UTP + H(+) = UDP-N-acetyl-alpha-D-glucosamine + diphosphate. Its pathway is nucleotide-sugar biosynthesis; UDP-N-acetyl-alpha-D-glucosamine biosynthesis; N-acetyl-alpha-D-glucosamine 1-phosphate from alpha-D-glucosamine 6-phosphate (route II): step 2/2. It functions in the pathway nucleotide-sugar biosynthesis; UDP-N-acetyl-alpha-D-glucosamine biosynthesis; UDP-N-acetyl-alpha-D-glucosamine from N-acetyl-alpha-D-glucosamine 1-phosphate: step 1/1. It participates in bacterial outer membrane biogenesis; LPS lipid A biosynthesis. In terms of biological role, catalyzes the last two sequential reactions in the de novo biosynthetic pathway for UDP-N-acetylglucosamine (UDP-GlcNAc). The C-terminal domain catalyzes the transfer of acetyl group from acetyl coenzyme A to glucosamine-1-phosphate (GlcN-1-P) to produce N-acetylglucosamine-1-phosphate (GlcNAc-1-P), which is converted into UDP-GlcNAc by the transfer of uridine 5-monophosphate (from uridine 5-triphosphate), a reaction catalyzed by the N-terminal domain. The protein is Bifunctional protein GlmU of Marinomonas sp. (strain MWYL1).